A 31-amino-acid chain; its full sequence is MEALVYTFLLVGTLGIIFFSIFFREPPRLLK.

A helical membrane pass occupies residues 3–23 (ALVYTFLLVGTLGIIFFSIFF).

The protein belongs to the PsbT family. In terms of assembly, PSII is composed of 1 copy each of membrane proteins PsbA, PsbB, PsbC, PsbD, PsbE, PsbF, PsbH, PsbI, PsbJ, PsbK, PsbL, PsbM, PsbT, PsbY, PsbZ, Psb30/Ycf12, at least 3 peripheral proteins of the oxygen-evolving complex and a large number of cofactors. It forms dimeric complexes.

The protein resides in the plastid. It is found in the chloroplast thylakoid membrane. Its function is as follows. Found at the monomer-monomer interface of the photosystem II (PS II) dimer, plays a role in assembly and dimerization of PSII. PSII is a light-driven water plastoquinone oxidoreductase, using light energy to abstract electrons from H(2)O, generating a proton gradient subsequently used for ATP formation. The sequence is that of Photosystem II reaction center protein T from Bigelowiella natans (Pedinomonas minutissima).